The sequence spans 283 residues: Peroxisomal protein 2 (283 aa).

A Peroxisomal target signal 1 (PTS1) motif is present at residues 281 to 283; sequence VKL.

It belongs to the PXP2 family.

It is found in the peroxisome matrix. It localises to the cytoplasm. The protein localises to the cytosol. Its function is as follows. Probably involved in peroxisome formation or maintenance as well as in amino acid metabolism. The polypeptide is Peroxisomal protein 2 (Saccharomyces cerevisiae (strain ATCC 204508 / S288c) (Baker's yeast)).